Here is a 729-residue protein sequence, read N- to C-terminus: MDDSTHAAEAVIATPAGDRTVRFETGRLAKQAAGSAVAYLGDTMVLSATTVSKQPKEQLDFFPLTVDVEERMYAAGRIPGSFFRREGRPSEDAILTCRLIDRPLRPSFAKGLRNEIQVVATVLALDPDTLYDVVAINAASASTTLSGLPFTGPIGATRVGFVDGEWIAFPTHAELARATFDMVVAGRVIEDGSDVAIMMVEAEATPGTVELLAHGAPAPTEEVVAAGLEAAKPAIRELCRAQSELAALAAKPAREFPVFIDYHDDVLDALSAAIGDELSAALRIPGKAERENELDRVRQLAAEKVASQFEGREKEIGAAYRALTKKLVRSRIVTESVRIDGRSTTEIRALSAEVDYIPRVHGSALFERGETQILGVTTLAMLRMEQTVDTLNPDRTKRYMHNYNFPPYSTGETGRVGSPKRREIGHGALAERALLPVLPSREEFPYAIRQVSEALGSNGSTSMGSVCASTLSLLNAGVPLKAPVAGIAMGLIHADDSYVTLTDILGAEDAYGDMDFKVAGTRDFVTALQLDTKLDGIPASVLAAALQQARGARLAILDVMAEAIGSPDEMSAHAPRVISVKIPVDKIGEVIGPKGKMINQIQADSGAEITVEDDGTIYIGAVDGPSAESARSAINAIANPQMPEVGERYLGTIVKITNFGAFVSLTPGRDGLLHVSKLKTLSGGKRVEKVEDVLTVGQKLQVEITEIDSRGKISLSPSAEAADAAAAAS.

Mg(2+) is bound by residues D509 and D515. The region spanning 575 to 634 (PRVISVKIPVDKIGEVIGPKGKMINQIQADSGAEITVEDDGTIYIGAVDGPSAESARSAI) is the KH domain. In terms of domain architecture, S1 motif spans 646-718 (GERYLGTIVK…SRGKISLSPS (73 aa)).

Belongs to the polyribonucleotide nucleotidyltransferase family. The cofactor is Mg(2+).

The protein localises to the cytoplasm. It catalyses the reaction RNA(n+1) + phosphate = RNA(n) + a ribonucleoside 5'-diphosphate. Its function is as follows. Involved in mRNA degradation. Catalyzes the phosphorolysis of single-stranded polyribonucleotides processively in the 3'- to 5'-direction. In Frankia casuarinae (strain DSM 45818 / CECT 9043 / HFP020203 / CcI3), this protein is Polyribonucleotide nucleotidyltransferase.